A 337-amino-acid chain; its full sequence is Ribose-phosphate pyrophosphokinase 4 (337 aa).

S2 carries the post-translational modification N-acetylserine. 2 residues coordinate Mg(2+): D158 and H160. The segment at G241–T256 is binding of phosphoribosylpyrophosphate.

This sequence belongs to the ribose-phosphate pyrophosphokinase family.

It catalyses the reaction D-ribose 5-phosphate + ATP = 5-phospho-alpha-D-ribose 1-diphosphate + AMP + H(+). This Arabidopsis thaliana (Mouse-ear cress) protein is Ribose-phosphate pyrophosphokinase 4 (PRS4).